A 64-amino-acid chain; its full sequence is SPbeta prophage-derived uncharacterized protein YosJ (64 aa).

This chain is SPbeta prophage-derived uncharacterized protein YosJ (yosJ), found in Bacillus subtilis (strain 168).